The chain runs to 207 residues: 5-amino-6-(5-phosphoribosylamino)uracil reductase (207 aa).

Residue Ser-6 coordinates substrate. Trp-8 is a binding site for NADP(+). Arg-22 lines the substrate pocket. Asp-38 serves as a coordination point for NADP(+). Substrate-binding residues include Leu-42 and Arg-45. Ser-72 serves as a coordination point for NADP(+). Glu-137 provides a ligand contact to substrate.

This sequence belongs to the HTP reductase family.

It carries out the reaction 5-amino-6-(5-phospho-D-ribitylamino)uracil + NADP(+) = 5-amino-6-(5-phospho-D-ribosylamino)uracil + NADPH + H(+). It functions in the pathway cofactor biosynthesis; riboflavin biosynthesis; 5-amino-6-(D-ribitylamino)uracil from GTP: step 3/4. This is 5-amino-6-(5-phosphoribosylamino)uracil reductase (ribD2) from Buchnera aphidicola subsp. Acyrthosiphon pisum (strain APS) (Acyrthosiphon pisum symbiotic bacterium).